A 493-amino-acid polypeptide reads, in one-letter code: GTPase Der (493 aa).

2 EngA-type G domains span residues 3 to 166 and 206 to 379; these read PVVA…AEAL and IKLA…KSAT. GTP-binding positions include 9–16, 56–60, 118–121, 212–219, 259–263, and 324–327; these read GRPNVGKS, DTGGI, NKVD, DTAGV, and NKWD. The 85-residue stretch at 380 to 464 folds into the KH-like domain; the sequence is TRVGTSVLTR…PIRIQFQNSE (85 aa).

Belongs to the TRAFAC class TrmE-Era-EngA-EngB-Septin-like GTPase superfamily. EngA (Der) GTPase family. Associates with the 50S ribosomal subunit.

Functionally, GTPase that plays an essential role in the late steps of ribosome biogenesis. The polypeptide is GTPase Der (Vibrio atlanticus (strain LGP32) (Vibrio splendidus (strain Mel32))).